The sequence spans 551 residues: Peptidyl-prolyl cis-trans isomerase-like 4 (551 aa).

A PPIase cyclophilin-type domain is found at 1-185; the sequence is MSVLLETSLG…RDIRIRHVVV (185 aa). The interval 54-88 is disordered; that stretch reads GDPSNTGKGGASIWSQLPSTSQDSSTSTYFTPESS. Polar residues predominate over residues 66 to 88; sequence IWSQLPSTSQDSSTSTYFTPESS. Positions 262-340 constitute an RRM domain; sequence NILFVCKLNP…RRIWVDFSQS (79 aa). The interval 352–551 is disordered; sequence RNAGSDAPRA…RQRSRDGSRR (200 aa). 2 stretches are compositionally biased toward basic and acidic residues: residues 384–397 and 408–454; these read KRGD…RDQP and SRQD…SHRD. A compositionally biased stretch (basic residues) spans 455–464; it reads HERHHLSRHV. Positions 465-551 are enriched in basic and acidic residues; sequence RPSDEGESKC…RQRSRDGSRR (87 aa).

Belongs to the cyclophilin-type PPIase family. PPIL4 subfamily.

The protein localises to the nucleus. The enzyme catalyses [protein]-peptidylproline (omega=180) = [protein]-peptidylproline (omega=0). Its function is as follows. PPIases accelerate the folding of proteins. It catalyzes the cis-trans isomerization of proline imidic peptide bonds in oligopeptides. In Mycosarcoma maydis (Corn smut fungus), this protein is Peptidyl-prolyl cis-trans isomerase-like 4 (CYP6).